The primary structure comprises 137 residues: Basic phospholipase A2 2 (137 aa).

The N-terminal stretch at 1–11 (LVAVCVSLLGA) is a signal peptide. A propeptide spanning residues 12–19 (ANIPPQPL) is cleaved from the precursor. Intrachain disulfides connect C30/C89, C44/C136, C46/C62, C61/C117, C68/C110, C78/C103, and C96/C108. 2 residues coordinate Ca(2+): Y45 and G47. Y48 contacts alpha-D-mannopyranose. Residue G49 coordinates Ca(2+). H65 is an active-site residue. D66 lines the Ca(2+) pocket. An alpha-D-mannopyranose-binding site is contributed by D66. D111 is an active-site residue.

It belongs to the phospholipase A2 family. Group I subfamily. D49 sub-subfamily. Homodimer; non-covalently linked. It depends on Ca(2+) as a cofactor. Homodimerization and interaction of the catalytically important Asp-49 (here Asp-111) with mannose molecules may render this protein inactive. In terms of tissue distribution, expressed by the venom gland.

It is found in the secreted. It catalyses the reaction a 1,2-diacyl-sn-glycero-3-phosphocholine + H2O = a 1-acyl-sn-glycero-3-phosphocholine + a fatty acid + H(+). Functionally, snake venom phospholipase A2 (PLA2) that shows anticoagulant and neurotoxic activities. PLA2 catalyzes the calcium-dependent hydrolysis of the 2-acyl groups in 3-sn-phosphoglycerides. This Bungarus caeruleus (Indian krait) protein is Basic phospholipase A2 2.